A 277-amino-acid chain; its full sequence is MALKQFNPTTPGQRQLVIVERSGLYKGKPVKMLTEGLSSKGGRNNRGRVTARFQGGGHKRSYRFVDFKRLKRDVLAKVERLEYDPNRTAFIALIRYEDGQLSYILAPQRLGVGDSVVAGSNVDVKPGNAMPLGNMPVGTIIHNVEMKPGKGGQIARSAGAYAQLVGRDHGMAILRLNSGEQRLVSSSCFATVGAVSNPDHGNINDGKAGRSRWRGKRPHVRGVAMNPVDHPHGGGEGRTSGGRHPVSPWGKPTKGKRTRSNKATDKFIMRTRHQRKK.

Residues G222–K277 are disordered.

It belongs to the universal ribosomal protein uL2 family. As to quaternary structure, part of the 50S ribosomal subunit. Forms a bridge to the 30S subunit in the 70S ribosome.

Functionally, one of the primary rRNA binding proteins. Required for association of the 30S and 50S subunits to form the 70S ribosome, for tRNA binding and peptide bond formation. It has been suggested to have peptidyltransferase activity; this is somewhat controversial. Makes several contacts with the 16S rRNA in the 70S ribosome. The polypeptide is Large ribosomal subunit protein uL2 (Bartonella tribocorum (strain CIP 105476 / IBS 506)).